Here is a 141-residue protein sequence, read N- to C-terminus: Putative pre-16S rRNA nuclease (141 aa).

Belongs to the YqgF nuclease family.

Its subcellular location is the cytoplasm. Functionally, could be a nuclease involved in processing of the 5'-end of pre-16S rRNA. In Acetivibrio thermocellus (strain ATCC 27405 / DSM 1237 / JCM 9322 / NBRC 103400 / NCIMB 10682 / NRRL B-4536 / VPI 7372) (Clostridium thermocellum), this protein is Putative pre-16S rRNA nuclease.